The primary structure comprises 376 residues: Anhydro-N-acetylmuramic acid kinase (376 aa).

22–29 serves as a coordination point for ATP; the sequence is GTSMDGAD.

This sequence belongs to the anhydro-N-acetylmuramic acid kinase family.

The enzyme catalyses 1,6-anhydro-N-acetyl-beta-muramate + ATP + H2O = N-acetyl-D-muramate 6-phosphate + ADP + H(+). It functions in the pathway amino-sugar metabolism; 1,6-anhydro-N-acetylmuramate degradation. It participates in cell wall biogenesis; peptidoglycan recycling. Functionally, catalyzes the specific phosphorylation of 1,6-anhydro-N-acetylmuramic acid (anhMurNAc) with the simultaneous cleavage of the 1,6-anhydro ring, generating MurNAc-6-P. Is required for the utilization of anhMurNAc either imported from the medium or derived from its own cell wall murein, and thus plays a role in cell wall recycling. This is Anhydro-N-acetylmuramic acid kinase from Neisseria gonorrhoeae (strain NCCP11945).